The chain runs to 91 residues: uncharacterized protein (91 aa).

The protein belongs to the UPF0440 family.

This is an uncharacterized protein from Methanothermobacter thermautotrophicus (strain ATCC 29096 / DSM 1053 / JCM 10044 / NBRC 100330 / Delta H) (Methanobacterium thermoautotrophicum).